We begin with the raw amino-acid sequence, 75 residues long: MAITSKYSNKQIEQMLTEMVDVLDKHRAPADLSLMLVGNIATNVLNQEVPAEQRKIIAEKFAQALLSSLDIPKTH.

It belongs to the UPF0352 family.

The protein is UPF0352 protein VSAL_I1058 of Aliivibrio salmonicida (strain LFI1238) (Vibrio salmonicida (strain LFI1238)).